Reading from the N-terminus, the 953-residue chain is Serine/threonine-protein kinase ppk30 (953 aa).

The 270-residue stretch at 57–326 (VIIQRYLSEG…IYQTLKEIME (270 aa)) folds into the Protein kinase domain. ATP contacts are provided by residues 63–71 (LSEGGFSHV) and Lys-85. The active-site Proton acceptor is the Asp-187. 6 disordered regions span residues 343 to 402 (ASTY…PSVS), 427 to 451 (SPIP…RRAD), 538 to 606 (RFLP…NRMN), 641 to 669 (RKEP…NKDV), 748 to 791 (STSQ…RPIG), and 864 to 953 (RKSC…ESLE). Composition is skewed to polar residues over residues 355-369 (RTPS…SRPA), 378-402 (TVQT…PSVS), and 433-444 (KSYSATIQTPRS). A compositionally biased stretch (low complexity) spans 547 to 557 (PSEFSSSVGSK). The segment covering 558-575 (QNLSMDIPSVQNVSTKQK) has biased composition (polar residues). Positions 656 to 669 (LKKDQSSEVANKDV) are enriched in basic and acidic residues. Residues 748 to 766 (STSQVSHTQRLQQSISTSL) are compositionally biased toward polar residues. Basic and acidic residues-rich tracts occupy residues 767-778 (ERVKSNTKKESN), 865-884 (KSCE…DLER), and 937-953 (PHIE…ESLE). Ser-872 and Ser-875 each carry phosphoserine.

This sequence belongs to the protein kinase superfamily. Ser/Thr protein kinase family.

It is found in the cytoplasm. It carries out the reaction L-seryl-[protein] + ATP = O-phospho-L-seryl-[protein] + ADP + H(+). The catalysed reaction is L-threonyl-[protein] + ATP = O-phospho-L-threonyl-[protein] + ADP + H(+). In Schizosaccharomyces pombe (strain 972 / ATCC 24843) (Fission yeast), this protein is Serine/threonine-protein kinase ppk30 (ppk30).